Here is a 286-residue protein sequence, read N- to C-terminus: Thymidylate synthase (286 aa).

R27 contacts dUMP. Position 57 (H57) interacts with (6R)-5,10-methylene-5,6,7,8-tetrahydrofolate. Residue 148 to 149 coordinates dUMP; the sequence is RR. C168 acts as the Nucleophile in catalysis. DUMP is bound by residues 188–191, N199, and 229–231; these read RSAD and HLY. Residue D191 participates in (6R)-5,10-methylene-5,6,7,8-tetrahydrofolate binding. A285 serves as a coordination point for (6R)-5,10-methylene-5,6,7,8-tetrahydrofolate.

This sequence belongs to the thymidylate synthase family. Bacterial-type ThyA subfamily. As to quaternary structure, homodimer.

It localises to the cytoplasm. The catalysed reaction is dUMP + (6R)-5,10-methylene-5,6,7,8-tetrahydrofolate = 7,8-dihydrofolate + dTMP. It participates in pyrimidine metabolism; dTTP biosynthesis. Its function is as follows. Catalyzes the reductive methylation of 2'-deoxyuridine-5'-monophosphate (dUMP) to 2'-deoxythymidine-5'-monophosphate (dTMP) while utilizing 5,10-methylenetetrahydrofolate (mTHF) as the methyl donor and reductant in the reaction, yielding dihydrofolate (DHF) as a by-product. This enzymatic reaction provides an intracellular de novo source of dTMP, an essential precursor for DNA biosynthesis. This chain is Thymidylate synthase, found in Psychrobacter sp. (strain PRwf-1).